Consider the following 295-residue polypeptide: MNTHKQEDIQLVIITGMSGAGKTVAIQSFEDLGYFCVDNLPPSLLPKFLELMKESNSKMSKVALVMDLRGREFFDSLIAALDEMSDLGWITPRILFLDANDKVLVSRYKETRRSHPLATTGLPLEGIAMERDLLEELKGRAQMIFDTSDLKPKQLREKIVAHFATSQGQVFTVNVMSFGFKYGLPIDADLVFDVRFLPNPYYIESMRPQTGNDEEVRSYVMKWSETQKFTEKLIDLLSFMLPSYKREGKSQLVIAIGCTGGQHRSVTLANYLSEYFKNDYYTHVTHRDIEKRSRK.

Residue 16 to 23 (GMSGAGKT) coordinates ATP. 67–70 (DLRG) contributes to the GTP binding site.

The protein belongs to the RapZ-like family.

Its function is as follows. Displays ATPase and GTPase activities. This chain is Nucleotide-binding protein BPUM_3115, found in Bacillus pumilus (strain SAFR-032).